Consider the following 481-residue polypeptide: Delta 4,5-hexuronate-2-O-sulfatase (481 aa).

Ser64 bears the 3-oxoalanine (Ser) mark. The Zn(2+) site is built by Cys225, Cys226, His462, and His469. The interval 453-481 is disordered; sequence VDADPRCRNHTPGYPSHEGPGAREILKRK. The span at 472–481 shows a compositional bias: basic and acidic residues; the sequence is PGAREILKRK.

This sequence belongs to the sulfatase family. It depends on Zn(2+) as a cofactor. In terms of processing, the conversion to 3-oxoalanine (also known as C-formylglycine, FGly), of a serine or cysteine residue in prokaryotes and of a cysteine residue in eukaryotes, is critical for catalytic activity.

Functionally, exosulfatase involved in the degradation of the glycosaminoglycans (GAGs) chondroitin sulfate (CS), dermatan sulfate (DS) and heparan sulfate (HS). 2-O-sulfatase active on unsaturated non-reducing end hexuronate units. Has a slight preference for HS-derived structures. GAG-specific sulfatases play a key role in the persistence of the major human gut symbiont B.thetaiotaomicron in the host gastrointestinal tract. The chain is Delta 4,5-hexuronate-2-O-sulfatase from Bacteroides thetaiotaomicron (strain ATCC 29148 / DSM 2079 / JCM 5827 / CCUG 10774 / NCTC 10582 / VPI-5482 / E50).